A 716-amino-acid polypeptide reads, in one-letter code: Polyribonucleotide nucleotidyltransferase (716 aa).

Mg(2+) contacts are provided by D495 and D501. Positions 562–621 (PRLFRIQINPEQIGLVIGPGGKTIRSITEQTGAKIDIEDTGAVTISAVDADSALRAKSII) constitute a KH domain. The region spanning 631 to 699 (GDVYIGKVTR…QKGRVNLTRK (69 aa)) is the S1 motif domain.

The protein belongs to the polyribonucleotide nucleotidyltransferase family. It depends on Mg(2+) as a cofactor.

It is found in the cytoplasm. The enzyme catalyses RNA(n+1) + phosphate = RNA(n) + a ribonucleoside 5'-diphosphate. In terms of biological role, involved in mRNA degradation. Catalyzes the phosphorolysis of single-stranded polyribonucleotides processively in the 3'- to 5'-direction. This Synechococcus elongatus (strain ATCC 33912 / PCC 7942 / FACHB-805) (Anacystis nidulans R2) protein is Polyribonucleotide nucleotidyltransferase.